Reading from the N-terminus, the 284-residue chain is 4-diphosphocytidyl-2-C-methyl-D-erythritol kinase (284 aa).

K9 is a catalytic residue. 90–100 (PLVSGLGGDSS) is a binding site for ATP. D132 is an active-site residue.

Belongs to the GHMP kinase family. IspE subfamily.

The catalysed reaction is 4-CDP-2-C-methyl-D-erythritol + ATP = 4-CDP-2-C-methyl-D-erythritol 2-phosphate + ADP + H(+). Its pathway is isoprenoid biosynthesis; isopentenyl diphosphate biosynthesis via DXP pathway; isopentenyl diphosphate from 1-deoxy-D-xylulose 5-phosphate: step 3/6. Catalyzes the phosphorylation of the position 2 hydroxy group of 4-diphosphocytidyl-2C-methyl-D-erythritol. This is 4-diphosphocytidyl-2-C-methyl-D-erythritol kinase from Dehalococcoides mccartyi (strain ATCC BAA-2100 / JCM 16839 / KCTC 5957 / BAV1).